We begin with the raw amino-acid sequence, 98 residues long: Large ribosomal subunit protein uL23 (98 aa).

It belongs to the universal ribosomal protein uL23 family. In terms of assembly, part of the 50S ribosomal subunit. Contacts protein L29, and trigger factor when it is bound to the ribosome.

Functionally, one of the early assembly proteins it binds 23S rRNA. One of the proteins that surrounds the polypeptide exit tunnel on the outside of the ribosome. Forms the main docking site for trigger factor binding to the ribosome. The protein is Large ribosomal subunit protein uL23 of Marinomonas sp. (strain MWYL1).